The chain runs to 1921 residues: Endoribonuclease Dicer (1921 aa).

The Helicase ATP-binding domain maps to 51–227 (LLEAALDHNT…ELEEKIKKLE (177 aa)). Residue 64 to 71 (LNTGSGKT) coordinates ATP. The short motif at 175-178 (DECH) is the DECH box element. The interval 409–433 (YVSWSDSEDDDEDEEIEEKEKPETN) is disordered. Residues 414 to 425 (DSEDDDEDEEIE) show a composition bias toward acidic residues. One can recognise a Helicase C-terminal domain in the interval 433-602 (NFPSPFTNIL…SVDTSETETE (170 aa)). The Dicer dsRNA-binding fold domain maps to 630–722 (AIGHINRYCA…MPVGKETVKY (93 aa)). Residues 727-746 (DLHDEEETSVPGRPGSTKRR) form a disordered region. The 148-residue stretch at 895-1042 (KFMEDIEKSE…LVPELCAIHP (148 aa)) folds into the PAZ domain. Positions 1270-1289 (NLSKDKVDSEKNTSSGYSSK) are disordered. 2 RNase III domains span residues 1277 to 1404 (DSEK…EETT) and 1665 to 1823 (FENF…MDSG). Positions 1317, 1396, 1399, and 1704 each coordinate Mg(2+). The interval 1782 to 1801 (QGMDSELRRSEEDEEKEEDI) is disordered. Mg(2+) contacts are provided by D1809 and E1812. The 66-residue stretch at 1848–1913 (VPRSPVRELL…ARRALRSLKA (66 aa)) folds into the DRBM domain.

This sequence belongs to the helicase family. Dicer subfamily. In terms of assembly, component of the RISC loading complex (RLC), or micro-RNA (miRNA) loading complex (miRLC), which is composed of DICER1, AGO2 and TARBP2; DICER1 and TARBP2 are required to process precursor miRNAs (pre-miRNAs) to mature miRNAs and then load them onto AGO2. Note that the trimeric RLC/miRLC is also referred to as RISC. It depends on Mg(2+) as a cofactor. Mn(2+) serves as cofactor.

The protein localises to the cytoplasm. The enzyme catalyses Endonucleolytic cleavage to 5'-phosphomonoester.. Double-stranded RNA (dsRNA) endoribonuclease playing a central role in short dsRNA-mediated post-transcriptional gene silencing. Cleaves naturally occurring long dsRNAs and short hairpin pre-microRNAs (miRNA) into fragments of twenty-one to twenty-three nucleotides with 3' overhang of two nucleotides, producing respectively short interfering RNAs (siRNA) and mature microRNAs. SiRNAs and miRNAs serve as guide to direct the RNA-induced silencing complex (RISC) to complementary RNAs to degrade them or prevent their translation. Gene silencing mediated by siRNAs, also called RNA interference, controls the elimination of transcripts from mobile and repetitive DNA elements of the genome but also the degradation of exogenous RNA of viral origin for instance. The miRNA pathway on the other side is a mean to specifically regulate the expression of target genes. The chain is Endoribonuclease Dicer (DICER1) from Gallus gallus (Chicken).